Reading from the N-terminus, the 472-residue chain is Argininosuccinate lyase (472 aa).

It belongs to the lyase 1 family. Argininosuccinate lyase subfamily.

The protein resides in the cytoplasm. It catalyses the reaction 2-(N(omega)-L-arginino)succinate = fumarate + L-arginine. The protein operates within amino-acid biosynthesis; L-arginine biosynthesis; L-arginine from L-ornithine and carbamoyl phosphate: step 3/3. This is Argininosuccinate lyase from Polynucleobacter asymbioticus (strain DSM 18221 / CIP 109841 / QLW-P1DMWA-1) (Polynucleobacter necessarius subsp. asymbioticus).